Consider the following 440-residue polypeptide: Beta-1,3-galactosyl-O-glycosyl-glycoprotein beta-1,6-N-acetylglucosaminyltransferase (440 aa).

Over 1–9 (MKMAGWKKK) the chain is Cytoplasmic. The chain crosses the membrane as a helical; Signal-anchor for type II membrane protein span at residues 10 to 30 (LCPGHHLWALGCYMLLAVVSL). Topologically, residues 31 to 440 (RLSLRFKCDV…RHKAIYGTEL (410 aa)) are lumenal. 2 N-linked (GlcNAc...) asparagine; by host glycosylation sites follow: asparagine 72 and asparagine 108. 4 cysteine pairs are disulfide-bonded: cysteine 73/cysteine 230, cysteine 164/cysteine 384, cysteine 185/cysteine 212, and cysteine 393/cysteine 425.

The protein belongs to the glycosyltransferase 14 family.

The protein resides in the host Golgi apparatus membrane. The catalysed reaction is a 3-O-[beta-D-galactosyl-(1-&gt;3)-N-acetyl-alpha-D-galactosaminyl]-L-seryl-[protein] + UDP-N-acetyl-alpha-D-glucosamine = 3-O-{beta-D-galactosyl-(1-&gt;3)-[N-acetyl-beta-D-glucosaminyl-(1-&gt;6)]-N-acetyl-alpha-D-galactosaminyl}-L-seryl-[protein] + UDP + H(+). The enzyme catalyses a 3-O-[beta-D-galactosyl-(1-&gt;3)-N-acetyl-alpha-D-galactosaminyl]-L-threonyl-[protein] + UDP-N-acetyl-alpha-D-glucosamine = a 3-O-{beta-D-galactosyl-(1-&gt;3)-[N-acetyl-beta-D-glucosaminyl-(1-&gt;6)]-N-acetyl-alpha-D-galactosaminyl}-L-threonyl-[protein] + UDP + H(+). It carries out the reaction a beta-D-Gal-(1-&gt;4)-beta-D-GlcNAc-(1-&gt;3)-beta-D-Gal-(1-&gt;4)-beta-D-GlcNAc derivative + UDP-N-acetyl-alpha-D-glucosamine = a beta-D-Gal-(1-&gt;4)-beta-D-GlcNAc-(1-&gt;3)-[beta-D-GlcNAc-(1-&gt;6)]-beta-D-Gal-(1-&gt;4)-N-acetyl-beta-D-glucosaminyl derivative + UDP + H(+). It catalyses the reaction 3-O-[N-acetyl-beta-D-glucosaminyl-(1-&gt;3)-N-acetyl-alpha-D-galactosaminyl]-L-seryl-[protein] + UDP-N-acetyl-alpha-D-glucosamine = 3-O-[N-acetyl-beta-D-glucosaminyl-(1-&gt;3)-[N-acetyl-beta-D-glucosaminyl-(1-&gt;6)]-N-acetyl-alpha-D-galactosaminyl]-L-seryl-[protein] + UDP + H(+). The catalysed reaction is a 3-O-[N-acetyl-beta-D-glucosaminyl-(1-&gt;3)-N-acetyl-alpha-D-galactosaminyl]-L-threonyl-[protein] + UDP-N-acetyl-alpha-D-glucosamine = 3-O-[N-acetyl-beta-D-glucosaminyl-(1-&gt;3)-[N-acetyl-beta-D-glucosaminyl-(1-&gt;6)]-N-acetyl-alpha-D-galactosaminyl]-L-threonyl-[protein] + UDP + H(+). Its pathway is protein modification; protein glycosylation. In terms of biological role, non-essential glycosyltransferase that can synthesize all known mucin beta 6 N-acetylglucosaminides. Mediates core 2 and core 4 O-glycan branching, 2 important steps in mucin-type biosynthesis. Has also I-branching enzyme activity by converting linear into branched poly-N-acetyllactosaminoglycans. Contributes to the post-translational modifications of structural proteins. In Bovine herpesvirus 4 (strain V. test) (BoHV-4), this protein is Beta-1,3-galactosyl-O-glycosyl-glycoprotein beta-1,6-N-acetylglucosaminyltransferase (Bo17).